Here is a 108-residue protein sequence, read N- to C-terminus: DNA-directed RNA polymerase III subunit RPC10 (108 aa).

Zn(2+)-binding residues include C5, C8, C25, C28, C69, and C72. Residues 5 to 28 (CPGCGNGLIVEEGQRCHRFACNTC) form a C4-type zinc finger. The TFIIS-type zinc-finger motif lies at 65–107 (TAESCPKCEHPRAYFMQLQTRSADEPMTTFYKCCNAQCGHRWR). Residues 88–89 (DE) carry the Hairpin motif. Positions 98 and 102 each coordinate Zn(2+).

Belongs to the archaeal RpoM/eukaryotic RPA12/RPB9/RPC11 RNA polymerase family. As to quaternary structure, component of the RNA polymerase III complex consisting of 17 subunits: a ten-subunit horseshoe-shaped catalytic core composed of POLR3A/RPC1, POLR3B/RPC2, POLR1C/RPAC1, POLR1D/RPAC2, POLR3K/RPC10, POLR2E/RPABC1, POLR2F/RPABC2, POLR2H/RPABC3, POLR2K/RPABC4 and POLR2L/RPABC5; a mobile stalk composed of two subunits POLR3H/RPC8 and CRCP/RPC9, protruding from the core and functioning primarily in transcription initiation; and additional subunits homologous to general transcription factors of the RNA polymerase II machinery, POLR3C/RPC3-POLR3F/RPC6-POLR3G/RPC7 heterotrimer required for transcription initiation and POLR3D/RPC4-POLR3E/RPC5 heterodimer involved in both transcription initiation and termination.

Its subcellular location is the nucleus. Functionally, core component of RNA polymerase III (Pol III) which synthesizes small non-coding RNAs using the four ribonucleoside triphosphates as substrates. Can mediate Pol I proofreading of the nascent RNA transcript. Anchors into the Pol III active site to constantly monitor transcription fidelity, cleaves mis-incorporated 5'-ribonucleotides and restarts the transcription process. Once Pol III reaches the poly(dT) termination signal, can induce Pol III clamp opening and transcription termination. Pol III plays an important role in sensing and limiting infection by intracellular bacteria and DNA viruses. Acts as a nuclear and cytosolic DNA sensor involved in innate immune response. Can sense non-self dsDNA that serves as template for transcription into dsRNA. The non-self RNA polymerase III transcripts, such as Epstein-Barr virus-encoded RNAs (EBERs) induce type I interferon and NF-kappa-B through the RIG-I pathway. The polypeptide is DNA-directed RNA polymerase III subunit RPC10 (Homo sapiens (Human)).